Consider the following 166-residue polypeptide: SsrA-binding protein (166 aa).

Residues 146 to 166 (KRAAEKEKQSKKDVKAAMERY) form a disordered region.

It belongs to the SmpB family.

Its subcellular location is the cytoplasm. Functionally, required for rescue of stalled ribosomes mediated by trans-translation. Binds to transfer-messenger RNA (tmRNA), required for stable association of tmRNA with ribosomes. tmRNA and SmpB together mimic tRNA shape, replacing the anticodon stem-loop with SmpB. tmRNA is encoded by the ssrA gene; the 2 termini fold to resemble tRNA(Ala) and it encodes a 'tag peptide', a short internal open reading frame. During trans-translation Ala-aminoacylated tmRNA acts like a tRNA, entering the A-site of stalled ribosomes, displacing the stalled mRNA. The ribosome then switches to translate the ORF on the tmRNA; the nascent peptide is terminated with the 'tag peptide' encoded by the tmRNA and targeted for degradation. The ribosome is freed to recommence translation, which seems to be the essential function of trans-translation. The chain is SsrA-binding protein from Synechococcus sp. (strain CC9605).